Consider the following 34-residue polypeptide: Potassium channel toxin alpha-KTx 6.3 (34 aa).

Cystine bridges form between C3/C24, C9/C29, C13/C31, and C19/C34. Position 34 is a cysteine amide (C34).

The protein belongs to the short scorpion toxin superfamily. Potassium channel inhibitor family. Alpha-KTx 06 subfamily. Post-translationally, amidated. The amidated toxin shows 5-fold more affinity for Kv1.3/KCNA3 than the synthetic carboxylated form. Expressed by the venom gland.

The protein resides in the secreted. In terms of biological role, potently blocks voltage-gated potassium channels Kv1.1/KCNA1 (IC(50)=7-11 nM) and Kv1.3/KCNA3 (IC(50)=11-29 pM). Also mildly blocks intermediate (IK) conductance calcium-activated potassium channels (KCa3.1/KCNN4) and ERG1/Kv11.1/KCNH2. Shows ability to suppress proliferation of lymphocytes, which are known to be sensitive to Kv1.3/KCNA3 homotetrameric channel block. The sequence is that of Potassium channel toxin alpha-KTx 6.3 from Heterometrus spinifer (Asia giant forest scorpion).